The primary structure comprises 320 residues: 3-ketodihydrosphingosine reductase TSC10 (320 aa).

The Cytoplasmic portion of the chain corresponds to 1 to 254 (MKFTLEDQVV…IIAKSLARGD (254 aa)). Leucine 11 is an NADP(+) binding site. 3 residues coordinate NADPH: glycine 14, serine 16, and glycine 18. The GXSXG motif lies at 14 to 18 (GGSQG). Residue leucine 19 participates in NADP(+) binding. Arginine 41, arginine 45, aspartate 89, and leucine 90 together coordinate NADPH. Aspartate 89 lines the NADP(+) pocket. Residue serine 166 is the Proton donor of the active site. NADP(+)-binding residues include tyrosine 180, lysine 184, and serine 213. Catalysis depends on tyrosine 180, which acts as the Proton acceptor. Lysine 184 acts as the Lowers pKa of active site Tyr in catalysis. The helical transmembrane segment at 255-275 (DDVFTDFVGWMIMGMDLGLTA) threads the bilayer. Residues 276 to 279 (KKSR) lie on the Lumenal side of the membrane. A helical membrane pass occupies residues 280-300 (FVPLQWIFGVLSNILVVPFYM). The Cytoplasmic segment spans residues 301-320 (VGCSWYIRKWFRENDGKKAN).

The protein belongs to the short-chain dehydrogenases/reductases (SDR) family. In terms of assembly, dimer or tetramer.

The protein localises to the endoplasmic reticulum membrane. The enzyme catalyses sphinganine + NADP(+) = 3-oxosphinganine + NADPH + H(+). It participates in lipid metabolism; sphingolipid metabolism. Functionally, catalyzes the reduction of 3'-oxosphinganine (3-ketodihydrosphingosine/KDS) to sphinganine (dihydrosphingosine/DHS), the second step of de novo sphingolipid biosynthesis. In Saccharomyces cerevisiae (strain ATCC 204508 / S288c) (Baker's yeast), this protein is 3-ketodihydrosphingosine reductase TSC10.